We begin with the raw amino-acid sequence, 91 residues long: uncharacterized protein (91 aa).

Residues 7-23 traverse the membrane as a helical segment; it reads IALVGVVVVLFGALRYQ.

The protein resides in the membrane. This is an uncharacterized protein from Haemophilus influenzae (strain ATCC 51907 / DSM 11121 / KW20 / Rd).